Consider the following 505-residue polypeptide: Deoxyguanosinetriphosphate triphosphohydrolase (505 aa).

The region spanning 66-273 is the HD domain; that stretch reads RLTHSLEVQQ…MEAADDISYC (208 aa).

The protein belongs to the dGTPase family. Type 1 subfamily. As to quaternary structure, homotetramer. Mg(2+) is required as a cofactor.

The enzyme catalyses dGTP + H2O = 2'-deoxyguanosine + triphosphate + H(+). In terms of biological role, dGTPase preferentially hydrolyzes dGTP over the other canonical NTPs. The sequence is that of Deoxyguanosinetriphosphate triphosphohydrolase from Yersinia enterocolitica serotype O:8 / biotype 1B (strain NCTC 13174 / 8081).